Reading from the N-terminus, the 671-residue chain is Palmitoleoyl-protein carboxylesterase NOTUM (671 aa).

The N-terminal stretch at 1–46 is a signal peptide; it reads MAVEQIDKMAAKAGEATNKWIKPQQPLLTLLLLLATFSQLPAVCSS. N-linked (GlcNAc...) asparagine glycosylation is present at Asn-95. Residues Ser-237 and Asp-338 each act as charge relay system in the active site. Asn-372 carries N-linked (GlcNAc...) asparagine glycosylation. His-384 (charge relay system) is an active-site residue. Residues 411-592 are disordered; the sequence is HSTRSRRHDK…TKSKKRHRVP (182 aa). Positions 439–454 are enriched in basic residues; sequence NQRHQRHRQRLQRQKH. A compositionally biased stretch (basic and acidic residues) spans 470–486; that stretch reads LSKEEREERKRLRQEQR. Positions 487 to 497 are enriched in basic residues; sequence QRRKQRRRQQQ. The segment covering 505-514 has biased composition (basic and acidic residues); it reads QEHRNKKDNS. Residues 570 to 583 show a composition bias toward polar residues; it reads PQKTRSSNNASAGT. Asn-578 and Asn-612 each carry an N-linked (GlcNAc...) asparagine glycan.

The protein belongs to the pectinacetylesterase family. Notum subfamily.

The protein resides in the secreted. It localises to the cell surface. The enzyme catalyses [Wnt protein]-O-(9Z)-hexadecenoyl-L-serine + H2O = [Wnt protein]-L-serine + (9Z)-hexadecenoate + H(+). Its function is as follows. Carboxylesterase that acts as a key negative regulator of the Wnt signaling pathway by specifically mediating depalmitoleoylation of WNT proteins. Serine palmitoleoylation of WNT proteins is required for efficient binding to frizzled receptors. Also acts as a regulator of long-range activity of Hedgehog (hh), possibly by regulating the switch between low and high level hh pathway signaling. The protein is Palmitoleoyl-protein carboxylesterase NOTUM of Drosophila melanogaster (Fruit fly).